Consider the following 253-residue polypeptide: tRNA pseudouridine synthase A (253 aa).

Aspartate 53 (nucleophile) is an active-site residue. Residue tyrosine 111 participates in substrate binding.

Belongs to the tRNA pseudouridine synthase TruA family. Homodimer.

The catalysed reaction is uridine(38/39/40) in tRNA = pseudouridine(38/39/40) in tRNA. Formation of pseudouridine at positions 38, 39 and 40 in the anticodon stem and loop of transfer RNAs. This Oceanobacillus iheyensis (strain DSM 14371 / CIP 107618 / JCM 11309 / KCTC 3954 / HTE831) protein is tRNA pseudouridine synthase A.